The chain runs to 423 residues: Gamma-glutamyl phosphate reductase (423 aa).

Belongs to the gamma-glutamyl phosphate reductase family.

The protein localises to the cytoplasm. It catalyses the reaction L-glutamate 5-semialdehyde + phosphate + NADP(+) = L-glutamyl 5-phosphate + NADPH + H(+). The protein operates within amino-acid biosynthesis; L-proline biosynthesis; L-glutamate 5-semialdehyde from L-glutamate: step 2/2. Catalyzes the NADPH-dependent reduction of L-glutamate 5-phosphate into L-glutamate 5-semialdehyde and phosphate. The product spontaneously undergoes cyclization to form 1-pyrroline-5-carboxylate. The sequence is that of Gamma-glutamyl phosphate reductase from Burkholderia ambifaria (strain ATCC BAA-244 / DSM 16087 / CCUG 44356 / LMG 19182 / AMMD) (Burkholderia cepacia (strain AMMD)).